The chain runs to 120 residues: Fluoride-specific ion channel FluC 1 (120 aa).

The next 2 helical transmembrane spans lie at 3–23 (ALLT…LNCA) and 42–62 (LGCL…VAAL). Na(+)-binding residues include Gly-69 and Thr-72. Residues 99–119 (ANLAAGVGAAVLGMAAVGWFL) form a helical membrane-spanning segment.

It belongs to the fluoride channel Fluc/FEX (TC 1.A.43) family.

The protein resides in the cell membrane. The enzyme catalyses fluoride(in) = fluoride(out). With respect to regulation, na(+) is not transported, but it plays an essential structural role and its presence is essential for fluoride channel function. In terms of biological role, fluoride-specific ion channel. Important for reducing fluoride concentration in the cell, thus reducing its toxicity. In Thermobifida fusca (strain YX), this protein is Fluoride-specific ion channel FluC 1.